The following is a 447-amino-acid chain: Trigger factor (447 aa).

Residues 164 to 249 (GNQVTFDFEG…VKLVEKSKLP (86 aa)) enclose the PPIase FKBP-type domain.

This sequence belongs to the FKBP-type PPIase family. Tig subfamily.

It localises to the cytoplasm. It catalyses the reaction [protein]-peptidylproline (omega=180) = [protein]-peptidylproline (omega=0). In terms of biological role, involved in protein export. Acts as a chaperone by maintaining the newly synthesized protein in an open conformation. Functions as a peptidyl-prolyl cis-trans isomerase. This chain is Trigger factor, found in Psychrobacter cryohalolentis (strain ATCC BAA-1226 / DSM 17306 / VKM B-2378 / K5).